We begin with the raw amino-acid sequence, 237 residues long: 7-cyano-7-deazaguanine synthase (237 aa).

9–19 (YSGGLDSTTCL) is an ATP binding site. Zn(2+) contacts are provided by cysteine 189, cysteine 199, cysteine 202, and cysteine 205.

The protein belongs to the QueC family. Zn(2+) is required as a cofactor.

The enzyme catalyses 7-carboxy-7-deazaguanine + NH4(+) + ATP = 7-cyano-7-deazaguanine + ADP + phosphate + H2O + H(+). It functions in the pathway purine metabolism; 7-cyano-7-deazaguanine biosynthesis. Its function is as follows. Catalyzes the ATP-dependent conversion of 7-carboxy-7-deazaguanine (CDG) to 7-cyano-7-deazaguanine (preQ(0)). This chain is 7-cyano-7-deazaguanine synthase, found in Geobacter sulfurreducens (strain ATCC 51573 / DSM 12127 / PCA).